Here is a 279-residue protein sequence, read N- to C-terminus: Nitrate import permease protein NrtB (279 aa).

Residues 86–270 enclose the ABC transmembrane type-1 domain; the sequence is IAASLQRVAV…LLNALVGFIA (185 aa). Helical transmembrane passes span 98-118, 124-144, 151-171, 196-216, 217-237, and 249-269; these read LMAAIAGIALGILIGVSVLMF, IFQVLRTVPPLAWLPISLAAF, AIFVIFITAIWPIIINTAVGV, VLLPATVPYIFTGLKIAIGLS, WLAIVAAEMLTGGVGIGFFIW, and ILAIIYVGLVGLLLNALVGFI.

Belongs to the binding-protein-dependent transport system permease family. CysTW subfamily. The complex is composed of two ATP-binding proteins (NrtC and NrtD), two transmembrane proteins (NrtB) and a solute-binding protein (NrtA).

Its subcellular location is the cell inner membrane. In terms of biological role, part of the ABC transporter complex NrtABCD involved in nitrate uptake. The complex is probably also involved in nitrite transport. Probably responsible for the translocation of the substrate across the membrane. This chain is Nitrate import permease protein NrtB, found in Leptolyngbya laminosa (Phormidium laminosum).